Consider the following 295-residue polypeptide: ATP synthase gamma chain (295 aa).

This sequence belongs to the ATPase gamma chain family. F-type ATPases have 2 components, CF(1) - the catalytic core - and CF(0) - the membrane proton channel. CF(1) has five subunits: alpha(3), beta(3), gamma(1), delta(1), epsilon(1). CF(0) has three main subunits: a, b and c.

The protein resides in the cell inner membrane. Its function is as follows. Produces ATP from ADP in the presence of a proton gradient across the membrane. The gamma chain is believed to be important in regulating ATPase activity and the flow of protons through the CF(0) complex. In Paraburkholderia phymatum (strain DSM 17167 / CIP 108236 / LMG 21445 / STM815) (Burkholderia phymatum), this protein is ATP synthase gamma chain.